A 494-amino-acid polypeptide reads, in one-letter code: Aspartyl/glutamyl-tRNA(Asn/Gln) amidotransferase subunit B (494 aa).

The protein belongs to the GatB/GatE family. GatB subfamily. In terms of assembly, heterotrimer of A, B and C subunits.

It carries out the reaction L-glutamyl-tRNA(Gln) + L-glutamine + ATP + H2O = L-glutaminyl-tRNA(Gln) + L-glutamate + ADP + phosphate + H(+). It catalyses the reaction L-aspartyl-tRNA(Asn) + L-glutamine + ATP + H2O = L-asparaginyl-tRNA(Asn) + L-glutamate + ADP + phosphate + 2 H(+). Allows the formation of correctly charged Asn-tRNA(Asn) or Gln-tRNA(Gln) through the transamidation of misacylated Asp-tRNA(Asn) or Glu-tRNA(Gln) in organisms which lack either or both of asparaginyl-tRNA or glutaminyl-tRNA synthetases. The reaction takes place in the presence of glutamine and ATP through an activated phospho-Asp-tRNA(Asn) or phospho-Glu-tRNA(Gln). This is Aspartyl/glutamyl-tRNA(Asn/Gln) amidotransferase subunit B from Synechococcus sp. (strain CC9902).